An 82-amino-acid polypeptide reads, in one-letter code: ATP synthase subunit c, chloroplastic (82 aa).

Transmembrane regions (helical) follow at residues 3 to 23 (PIIS…AAIG) and 57 to 77 (LAFM…LLFA).

This sequence belongs to the ATPase C chain family. F-type ATPases have 2 components, F(1) - the catalytic core - and F(0) - the membrane proton channel. F(1) has five subunits: alpha(3), beta(3), gamma(1), delta(1), epsilon(1). F(0) has four main subunits: a(1), b(1), b'(1) and c(10-14). The alpha and beta chains form an alternating ring which encloses part of the gamma chain. F(1) is attached to F(0) by a central stalk formed by the gamma and epsilon chains, while a peripheral stalk is formed by the delta, b and b' chains.

It is found in the plastid. The protein resides in the chloroplast thylakoid membrane. In terms of biological role, f(1)F(0) ATP synthase produces ATP from ADP in the presence of a proton or sodium gradient. F-type ATPases consist of two structural domains, F(1) containing the extramembraneous catalytic core and F(0) containing the membrane proton channel, linked together by a central stalk and a peripheral stalk. During catalysis, ATP synthesis in the catalytic domain of F(1) is coupled via a rotary mechanism of the central stalk subunits to proton translocation. Its function is as follows. Key component of the F(0) channel; it plays a direct role in translocation across the membrane. A homomeric c-ring of between 10-14 subunits forms the central stalk rotor element with the F(1) delta and epsilon subunits. In Phaeodactylum tricornutum (strain CCAP 1055/1), this protein is ATP synthase subunit c, chloroplastic.